Consider the following 80-residue polypeptide: D-alanyl carrier protein 2 (80 aa).

The Carrier domain maps to 1–80 (MIMDDVKATV…KIVAKVASLQ (80 aa)). An O-(pantetheine 4'-phosphoryl)serine modification is found at serine 38.

It belongs to the DltC family. Post-translationally, 4'-phosphopantetheine is transferred from CoA to a specific serine of apo-DCP.

The protein resides in the cytoplasm. Its pathway is cell wall biogenesis; lipoteichoic acid biosynthesis. Carrier protein involved in the D-alanylation of lipoteichoic acid (LTA). The loading of thioester-linked D-alanine onto DltC is catalyzed by D-alanine--D-alanyl carrier protein ligase DltA. The DltC-carried D-alanyl group is further transferred to cell membrane phosphatidylglycerol (PG) by forming an ester bond, probably catalyzed by DltD. D-alanylation of LTA plays an important role in modulating the properties of the cell wall in Gram-positive bacteria, influencing the net charge of the cell wall. In Lactiplantibacillus plantarum (strain ATCC BAA-793 / NCIMB 8826 / WCFS1) (Lactobacillus plantarum), this protein is D-alanyl carrier protein 2.